We begin with the raw amino-acid sequence, 122 residues long: Large ribosomal subunit protein bL17 (122 aa).

Belongs to the bacterial ribosomal protein bL17 family. As to quaternary structure, part of the 50S ribosomal subunit. Contacts protein L32.

In Neisseria meningitidis serogroup C / serotype 2a (strain ATCC 700532 / DSM 15464 / FAM18), this protein is Large ribosomal subunit protein bL17.